The following is a 353-amino-acid chain: tRNA-splicing endonuclease (353 aa).

Active-site residues include Tyr289, His300, and Lys331.

Belongs to the tRNA-intron endonuclease family. Archaeal long subfamily. Homodimer.

It catalyses the reaction pretRNA = a 3'-half-tRNA molecule with a 5'-OH end + a 5'-half-tRNA molecule with a 2',3'-cyclic phosphate end + an intron with a 2',3'-cyclic phosphate and a 5'-hydroxyl terminus.. Its function is as follows. Endonuclease that removes tRNA introns. Cleaves pre-tRNA at the 5'- and 3'-splice sites to release the intron. The products are an intron and two tRNA half-molecules bearing 2',3' cyclic phosphate and 5'-OH termini. Recognizes a pseudosymmetric substrate in which 2 bulged loops of 3 bases are separated by a stem of 4 bp. In Methanosarcina mazei (strain ATCC BAA-159 / DSM 3647 / Goe1 / Go1 / JCM 11833 / OCM 88) (Methanosarcina frisia), this protein is tRNA-splicing endonuclease.